We begin with the raw amino-acid sequence, 294 residues long: Phosphatidylserine decarboxylase proenzyme (294 aa).

Active-site charge relay system; for autoendoproteolytic cleavage activity residues include Asp100, His157, and Ser261. Ser261 functions as the Schiff-base intermediate with substrate; via pyruvic acid; for decarboxylase activity in the catalytic mechanism. Residue Ser261 is modified to Pyruvic acid (Ser); by autocatalysis.

Belongs to the phosphatidylserine decarboxylase family. PSD-B subfamily. Prokaryotic type I sub-subfamily. As to quaternary structure, heterodimer of a large membrane-associated beta subunit and a small pyruvoyl-containing alpha subunit. Requires pyruvate as cofactor. Post-translationally, is synthesized initially as an inactive proenzyme. Formation of the active enzyme involves a self-maturation process in which the active site pyruvoyl group is generated from an internal serine residue via an autocatalytic post-translational modification. Two non-identical subunits are generated from the proenzyme in this reaction, and the pyruvate is formed at the N-terminus of the alpha chain, which is derived from the carboxyl end of the proenzyme. The autoendoproteolytic cleavage occurs by a canonical serine protease mechanism, in which the side chain hydroxyl group of the serine supplies its oxygen atom to form the C-terminus of the beta chain, while the remainder of the serine residue undergoes an oxidative deamination to produce ammonia and the pyruvoyl prosthetic group on the alpha chain. During this reaction, the Ser that is part of the protease active site of the proenzyme becomes the pyruvoyl prosthetic group, which constitutes an essential element of the active site of the mature decarboxylase.

Its subcellular location is the cell membrane. It carries out the reaction a 1,2-diacyl-sn-glycero-3-phospho-L-serine + H(+) = a 1,2-diacyl-sn-glycero-3-phosphoethanolamine + CO2. Its pathway is phospholipid metabolism; phosphatidylethanolamine biosynthesis; phosphatidylethanolamine from CDP-diacylglycerol: step 2/2. In terms of biological role, catalyzes the formation of phosphatidylethanolamine (PtdEtn) from phosphatidylserine (PtdSer). This chain is Phosphatidylserine decarboxylase proenzyme, found in Mannheimia succiniciproducens (strain KCTC 0769BP / MBEL55E).